Reading from the N-terminus, the 315-residue chain is Transcription antitermination protein NusB (315 aa).

Positions 296–315 (SANFDTKSAELNDADEKSQD) are disordered. Basic and acidic residues predominate over residues 302-315 (KSAELNDADEKSQD).

The protein belongs to the NusB family.

In terms of biological role, involved in transcription antitermination. Required for transcription of ribosomal RNA (rRNA) genes. Binds specifically to the boxA antiterminator sequence of the ribosomal RNA (rrn) operons. This is Transcription antitermination protein NusB from Psychrobacter cryohalolentis (strain ATCC BAA-1226 / DSM 17306 / VKM B-2378 / K5).